The sequence spans 694 residues: Elongation factor G (694 aa).

The region spanning 8–285 (EKVRNIGIAA…AVVELLPSPQ (278 aa)) is the tr-type G domain. Residues 17–24 (AHIDAGKT), 81–85 (DTPGH), and 135–138 (NKMD) each bind GTP.

This sequence belongs to the TRAFAC class translation factor GTPase superfamily. Classic translation factor GTPase family. EF-G/EF-2 subfamily.

The protein resides in the cytoplasm. Functionally, catalyzes the GTP-dependent ribosomal translocation step during translation elongation. During this step, the ribosome changes from the pre-translocational (PRE) to the post-translocational (POST) state as the newly formed A-site-bound peptidyl-tRNA and P-site-bound deacylated tRNA move to the P and E sites, respectively. Catalyzes the coordinated movement of the two tRNA molecules, the mRNA and conformational changes in the ribosome. The sequence is that of Elongation factor G (fusA) from Synechococcus sp. (strain ATCC 27144 / PCC 6301 / SAUG 1402/1) (Anacystis nidulans).